The sequence spans 1700 residues: A-kinase anchor protein SPHKAP (1700 aa).

3 disordered regions span residues 364–385 (SNLN…QDGE), 742–778 (IRRR…SNSH), and 793–885 (SKQD…NTQE). Over residues 768 to 778 (SSSSSPLSNSH) the composition is skewed to low complexity. Residues 822–831 (DSSTATTSSK) are compositionally biased toward polar residues. Residues 839–855 (AGEDTKSPHHSENECRA) show a composition bias toward basic and acidic residues. The segment covering 857-873 (SEGQRSPTVSQSRSGSQ) has biased composition (polar residues). The segment at 929-946 (FAEELADTVVSMATEIAA) is PKA-RII subunit binding domain. The disordered stretch occupies residues 980–1006 (KRKKESQGSGTAVRKHKPPRLSEIKRK). A phosphoserine mark is found at Ser-1025, Ser-1085, Ser-1107, Ser-1120, Ser-1121, Ser-1124, Ser-1259, and Ser-1288. 3 disordered regions span residues 1374 to 1414 (DSVT…PVPI), 1481 to 1535 (IHSD…DTSS), and 1585 to 1604 (GQSE…TASP). Positions 1383–1398 (PVSSLSKTASLTNHSP) are enriched in polar residues. The span at 1586 to 1604 (QSESTEAPASGPPTGTASP) shows a compositional bias: polar residues.

This sequence belongs to the AKAP110 family. Interacts (via the PKA-RII subunit binding domain) with the RI subunit of PKA. Interacts with SPHK1; the interaction greatly reduces SPHK1 activity. In terms of tissue distribution, highly expressed in heart. Both isoforms abundantly expressed in ventricle. Also expressed in spleen, ovary and brain.

Its subcellular location is the cytoplasm. Anchoring protein that binds preferentially to the type I regulatory subunit of c-AMP-dependent protein kinase (PKA type I) and targets it to distinct subcellular compartments. May act as a converging factor linking cAMP and sphingosine signaling pathways. Plays a regulatory role in the modulation of SPHK1. This is A-kinase anchor protein SPHKAP (SPHKAP) from Homo sapiens (Human).